The sequence spans 314 residues: Acetaldehyde dehydrogenase 2 (314 aa).

15-18 (SGNI) serves as a coordination point for NAD(+). Residue C133 is the Acyl-thioester intermediate of the active site. Residues 164–172 (SAGPGTRAN) and N291 contribute to the NAD(+) site.

Belongs to the acetaldehyde dehydrogenase family.

The enzyme catalyses acetaldehyde + NAD(+) + CoA = acetyl-CoA + NADH + H(+). This is Acetaldehyde dehydrogenase 2 from Pseudomonas putida (strain ATCC 700007 / DSM 6899 / JCM 31910 / BCRC 17059 / LMG 24140 / F1).